A 613-amino-acid chain; its full sequence is Lysophospholipase 1 (613 aa).

Positions 1–21 are cleaved as a signal peptide; it reads MLFRGLSLWMLFLASCLSALA. The PLA2c domain occupies 55-593; the sequence is DCPSDNIVES…YNYCWSGLYD (539 aa). Residues N142, N173, N220, N244, N281, N319, N348, N365, N494, N499, N523, N551, and N572 are each glycosylated (N-linked (GlcNAc...) asparagine).

Belongs to the lysophospholipase family.

It localises to the secreted. The catalysed reaction is a 1-acyl-sn-glycero-3-phosphocholine + H2O = sn-glycerol 3-phosphocholine + a fatty acid + H(+). Functionally, catalyzes the release of fatty acids from lysophospholipids. Required for survival under high osmolarity, for normal osmotic stress-induced gene expression, and for nutrient-mediated repression of sexual differentiation. This is Lysophospholipase 1 (plb1) from Schizosaccharomyces pombe (strain 972 / ATCC 24843) (Fission yeast).